A 232-amino-acid chain; its full sequence is UPF0758 protein BH3032 (232 aa).

Residues 107–229 form the MPN domain; that stretch reads VIRTPEDVSR…FVSLKEKGHL (123 aa). Residues H178, H180, and D191 each contribute to the Zn(2+) site. Residues 178–191 carry the JAMM motif motif; the sequence is HNHPSGDPTPSRED.

Belongs to the UPF0758 family.

The sequence is that of UPF0758 protein BH3032 from Halalkalibacterium halodurans (strain ATCC BAA-125 / DSM 18197 / FERM 7344 / JCM 9153 / C-125) (Bacillus halodurans).